The sequence spans 514 residues: MEEESLAAALHTYRAQLEQVELSLRAGTDPTQLEDLTQLRNDLQQLIELTESSLLSVRKCKLLSSLEGSASLPAPEEPAAISSQDEEYEAFRRAIGEEPQPPGAGDGASTGSKDSEEEEEEEDGSSGMKVKAPYYSTWGTLEYHNAMVVGSEQLEDGEAGVRVLYLYPTHKAMKPCPFFLDGKCRFDDSCRFSHGQVVALAELQPFAEADVASLAVGSPCLAQHSDGIWYPARITDIKSGFYTVKFDSLLLKESVLEADSIIPPLRGSDSSSSDDDDDDEEEDDAAEDSGYARVLGAGSAGSAHSSQFGGWEAHTRGIGSKLLARMGYEIGKGLGRNAEGRVEPIQAVLLPKGKSLDQCIEMQQRKKAGGKREHKAGKRRPRATGRGGGTKSARNVFDFLNEKLEGRPSGAQPGESRRAAERKGKELYNASKDSKRALSVQVAVTAQRIQQKQREIGHLQEALARNVGRDSVVSNQLELRLSGARRELVMLQQEEHSLQREQRKADTHKKMTEF.

The disordered stretch occupies residues 96-129; sequence GEEPQPPGAGDGASTGSKDSEEEEEEEDGSSGMK. Positions 115 to 124 are enriched in acidic residues; that stretch reads SEEEEEEEDG. Residues 171 to 197 form a C3H1-type zinc finger; it reads KAMKPCPFFLDGKCRFDDSCRFSHGQV. Disordered stretches follow at residues 262-288, 363-422, and 494-514; these read IPPL…AAED, QQRK…AAER, and EEHS…MTEF. Acidic residues predominate over residues 272–287; the sequence is SSDDDDDDEEEDDAAE. A G-patch domain is found at 315–373; it reads TRGIGSKLLARMGYEIGKGLGRNAEGRVEPIQAVLLPKGKSLDQCIEMQQRKKAGGKRE. Residues 365-383 show a composition bias toward basic residues; that stretch reads RKKAGGKREHKAGKRRPRA.

It is found in the nucleus. Transcription repressor that specifically binds the 5'-GGAG[GA]A[GA]A-3' consensus sequence. Represses transcription by recruiting the chromatin multiprotein complex NuRD to target promoters. Negatively regulates expression of EGFR, a gene involved in cell proliferation, survival and migration. The polypeptide is Zinc finger CCCH-type with G patch domain-containing protein (zgpat) (Xenopus tropicalis (Western clawed frog)).